The chain runs to 444 residues: Phosphoglucosamine mutase (444 aa).

Residue Ser-99 is the Phosphoserine intermediate of the active site. Positions 99, 242, 244, and 246 each coordinate Mg(2+). At Ser-99 the chain carries Phosphoserine.

The protein belongs to the phosphohexose mutase family. Requires Mg(2+) as cofactor. Post-translationally, activated by phosphorylation.

It carries out the reaction alpha-D-glucosamine 1-phosphate = D-glucosamine 6-phosphate. Catalyzes the conversion of glucosamine-6-phosphate to glucosamine-1-phosphate. This is Phosphoglucosamine mutase from Aliarcobacter butzleri (strain RM4018) (Arcobacter butzleri).